The sequence spans 106 residues: Iron-sulfur cluster assembly protein CyaY (106 aa).

It belongs to the frataxin family.

Functionally, involved in iron-sulfur (Fe-S) cluster assembly. May act as a regulator of Fe-S biogenesis. This Escherichia coli O9:H4 (strain HS) protein is Iron-sulfur cluster assembly protein CyaY.